The sequence spans 282 residues: Insulin-like growth factor-binding protein 7 (282 aa).

The N-terminal stretch at 1–26 (MERPSLRALLLGAAGLLLLLLPLSSS) is a signal peptide. An IGFBP N-terminal domain is found at 28 to 114 (SSDTCGPCEP…PGVSGVCVCK (87 aa)). Cystine bridges form between C32/C57, C35/C59, C40/C60, C48/C63, C71/C87, C81/C111, and C120/C156. Positions 105–158 (PGVSGVCVCKSRYPVCGSDGTTYPSGCQLRAASQRAESRGEKAITQVSKGTCEQ) constitute a Kazal-like domain. The region spanning 160–264 (PSIVTPPKDI…GQASASAKIT (105 aa)) is the Ig-like C2-type domain. N171 carries N-linked (GlcNAc...) asparagine glycosylation. Residues C181 and C248 are joined by a disulfide bond. S239 carries the post-translational modification Phosphoserine; by FAM20C.

As to quaternary structure, may interact with VPS24/CHMP3; the relevance of such interaction however remains unclear. Interacts with CD93; this interaction plays a role in endothelial cells angiogenesis. In terms of processing, N-glycosylated.

The protein localises to the secreted. Its function is as follows. Binds IGF1 and IGF2 with a relatively low affinity. Stimulates prostacyclin (PGI2) production. Stimulates cell adhesion. Acts as a ligand for CD93 to play a role in angiogenesis. The sequence is that of Insulin-like growth factor-binding protein 7 (IGFBP7) from Homo sapiens (Human).